Here is a 494-residue protein sequence, read N- to C-terminus: tRNA-2-methylthio-N(6)-dimethylallyladenosine synthase (494 aa).

Residues 5 to 121 (RTYQVRTYGC…LPALLERARV (117 aa)) enclose the MTTase N-terminal domain. [4Fe-4S] cluster-binding residues include cysteine 14, cysteine 50, cysteine 84, cysteine 158, cysteine 162, and cysteine 165. The region spanning 144–374 (RESVYAAWVA…LELQERISEE (231 aa)) is the Radical SAM core domain. Positions 377 to 446 (AKFVGREVEV…PHHLVADSGI (70 aa)) constitute a TRAM domain. A compositionally biased stretch (basic and acidic residues) spans 458–468 (WEARNAPERRP). The segment at 458 to 494 (WEARNAPERRPTGVLLGMPKVGAPEPQPSVVGGCCDS) is disordered.

Belongs to the methylthiotransferase family. MiaB subfamily. Monomer. [4Fe-4S] cluster serves as cofactor.

It localises to the cytoplasm. It catalyses the reaction N(6)-dimethylallyladenosine(37) in tRNA + (sulfur carrier)-SH + AH2 + 2 S-adenosyl-L-methionine = 2-methylsulfanyl-N(6)-dimethylallyladenosine(37) in tRNA + (sulfur carrier)-H + 5'-deoxyadenosine + L-methionine + A + S-adenosyl-L-homocysteine + 2 H(+). Its function is as follows. Catalyzes the methylthiolation of N6-(dimethylallyl)adenosine (i(6)A), leading to the formation of 2-methylthio-N6-(dimethylallyl)adenosine (ms(2)i(6)A) at position 37 in tRNAs that read codons beginning with uridine. The sequence is that of tRNA-2-methylthio-N(6)-dimethylallyladenosine synthase from Thermobifida fusca (strain YX).